We begin with the raw amino-acid sequence, 300 residues long: Fructose-bisphosphate aldolase class 1 (300 aa).

The active-site Proton acceptor is glutamate 181. Catalysis depends on lysine 218, which acts as the Schiff-base intermediate with dihydroxyacetone-P.

It belongs to the class I fructose-bisphosphate aldolase family.

The enzyme catalyses beta-D-fructose 1,6-bisphosphate = D-glyceraldehyde 3-phosphate + dihydroxyacetone phosphate. Its pathway is carbohydrate degradation; glycolysis; D-glyceraldehyde 3-phosphate and glycerone phosphate from D-glucose: step 4/4. The chain is Fructose-bisphosphate aldolase class 1 (fda) from Synechocystis sp. (strain ATCC 27184 / PCC 6803 / Kazusa).